The primary structure comprises 1832 residues: Multifunctional protein pyr-3 (1832 aa).

The segment at 2 to 400 (AATVYRPATA…PGPRDTEFLF (399 aa)) is GATase (Glutamine amidotransferase). L-glutamine contacts are provided by Ser64, Gly273, and Gly275. The region spanning 228-413 (RILCLDVGMK…IQTVAKCTTD (186 aa)) is the Glutamine amidotransferase type-1 domain. Catalysis depends on Cys302, which acts as the Nucleophile; for GATase activity. The L-glutamine site is built by Leu303, Gln306, Asn344, Gly346, and Tyr347. Catalysis depends on for GATase activity residues His386 and Glu388. The segment at 401-442 (DVFIQTVAKCTTDNTLLQKGVEFPGGTTEENERLHPRVDVKK) is linker. The segment at 443–983 (VLVLGSGGLS…SEHDVSFEDR (541 aa)) is CPSase A. The tract at residues 443–1484 (VLVLGSGGLS…TNVKNAKILV (1042 aa)) is CPSase (Carbamoyl phosphate synthase). ATP contacts are provided by Arg560, Arg600, Gly606, Gly607, Arg637, Met639, Glu644, Gly670, Ile671, His672, Gln713, and Glu727. 2 consecutive ATP-grasp domains span residues 564-756 (ARSM…KLGL) and 1102-1293 (SRML…KAIM). Mg(2+) contacts are provided by Gln713, Glu727, and Asn729. Mn(2+) contacts are provided by Gln713, Glu727, and Asn729. The CPSase B stretch occupies residues 984–1484 (GVMVLGSGVY…TNVKNAKILV (501 aa)). ATP-binding residues include Arg1138, Lys1177, Ile1179, Glu1184, Gly1209, Val1210, His1211, Ser1212, Gln1252, and Glu1264. Positions 1252, 1264, and 1266 each coordinate Mg(2+). 3 residues coordinate Mn(2+): Gln1252, Glu1264, and Asn1266. The MGS-like domain maps to 1359-1507 (FKVPKKNILL…RDYQTSHTPL (149 aa)). Residues 1485 to 1528 (EAIARYRDMEIGERDYQTSHTPLQLSGQVNFTLQDSLSRPHSFK) form a linker region. Residues 1529 to 1832 (KAHVLSVEQY…MALLALVMSG (304 aa)) form an ATCase (Aspartate transcarbamylase) region. Residues Arg1581 and Thr1582 each coordinate carbamoyl phosphate. Lys1609 is an L-aspartate binding site. Residues Arg1630, His1658, and Gln1661 each coordinate carbamoyl phosphate. Arg1691 and Arg1754 together coordinate L-aspartate. Carbamoyl phosphate contacts are provided by Leu1793 and Pro1794.

The protein in the N-terminal section; belongs to the CarA family. This sequence in the central section; belongs to the CarB family. It in the C-terminal section; belongs to the aspartate/ornithine carbamoyltransferase superfamily. ATCase family. Requires Mg(2+) as cofactor. Mn(2+) serves as cofactor.

Its subcellular location is the cytoplasm. It is found in the nucleus. It catalyses the reaction hydrogencarbonate + L-glutamine + 2 ATP + H2O = carbamoyl phosphate + L-glutamate + 2 ADP + phosphate + 2 H(+). The catalysed reaction is L-glutamine + H2O = L-glutamate + NH4(+). The enzyme catalyses hydrogencarbonate + NH4(+) + 2 ATP = carbamoyl phosphate + 2 ADP + phosphate + 2 H(+). It carries out the reaction carbamoyl phosphate + L-aspartate = N-carbamoyl-L-aspartate + phosphate + H(+). The protein operates within pyrimidine metabolism; UMP biosynthesis via de novo pathway; (S)-dihydroorotate from bicarbonate: step 1/3. It participates in pyrimidine metabolism; UMP biosynthesis via de novo pathway; (S)-dihydroorotate from bicarbonate: step 2/3. With respect to regulation, both CPSase and ATCase activities are feedback inhibited by the end product UTP. Its function is as follows. Multifunctional protein that encodes the first 2 enzymatic activities of the de novo pyrimidine pathway: carbamoylphosphate synthetase (CPSase; EC 6.3.5.5) and aspartate transcarbamylase (ATCase; EC 2.1.3.2). The CPSase-function is accomplished in 2 steps, by a glutamine-dependent amidotransferase activity (GATase) that binds and cleaves glutamine to produce ammonia, followed by an ammonium-dependent carbamoyl phosphate synthetase, which reacts with the ammonia, hydrogencarbonate and ATP to form carbamoyl phosphate. The endogenously produced carbamoyl phosphate is sequestered and channeled to the ATCase active site. ATCase then catalyzes the formation of carbamoyl-L-aspartate from L-aspartate and carbamoyl phosphate. The protein is Multifunctional protein pyr-3 (pyr-3) of Neurospora crassa (strain ATCC 24698 / 74-OR23-1A / CBS 708.71 / DSM 1257 / FGSC 987).